Reading from the N-terminus, the 343-residue chain is Vancomycin C-type resistance protein VanC1 (343 aa).

One can recognise an ATP-grasp domain in the interval 134 to 336; it reads HQLADTMGIA…YEILVEQLIA (203 aa). Residue 164–219 participates in ATP binding; the sequence is IQDHGFPIFIKPNEAGSSKGITKVTDKTALQSALTTAFAYGSTVLIQKAIAGIEIG. Mg(2+) contacts are provided by aspartate 290, glutamate 303, and asparagine 305. Mn(2+) contacts are provided by aspartate 290, glutamate 303, and asparagine 305.

It belongs to the D-alanine--D-alanine ligase family. Mg(2+) serves as cofactor. Requires Mn(2+) as cofactor.

It localises to the cell membrane. The enzyme catalyses D-serine + D-alanine + ATP = D-alanyl-D-serine + ADP + phosphate + H(+). Functionally, D-alanine--D-alanine ligase of altered specificity, which catalyzes synthesis of D-Ala-D-Ser; produces a peptidoglycan which does not terminate in D-alanine but in D-serine, thus probably reducing affinity for vancomycin. Together with VanT and VanXYC, required for vancomycin resistance in E.gallinarum strain BM4174. This Enterococcus gallinarum protein is Vancomycin C-type resistance protein VanC1.